Consider the following 384-residue polypeptide: Chaperone protein DnaJ (384 aa).

The region spanning 5–69 (DYYKVLGVDR…QKRAQYDQFG (65 aa)) is the J domain. Residues 141–223 (GKKTQVSYTR…CGGKGTVERK (83 aa)) form a CR-type zinc finger. The Zn(2+) site is built by C154, C157, C171, C174, C197, C200, C211, and C214. CXXCXGXG motif repeat units lie at residues 154-161 (CETCGGNG), 171-178 (CDKCHGTG), 197-204 (CDKCNGRG), and 211-218 (CKTCGGKG).

The protein belongs to the DnaJ family. Homodimer. Requires Zn(2+) as cofactor.

Its subcellular location is the cytoplasm. Functionally, participates actively in the response to hyperosmotic and heat shock by preventing the aggregation of stress-denatured proteins and by disaggregating proteins, also in an autonomous, DnaK-independent fashion. Unfolded proteins bind initially to DnaJ; upon interaction with the DnaJ-bound protein, DnaK hydrolyzes its bound ATP, resulting in the formation of a stable complex. GrpE releases ADP from DnaK; ATP binding to DnaK triggers the release of the substrate protein, thus completing the reaction cycle. Several rounds of ATP-dependent interactions between DnaJ, DnaK and GrpE are required for fully efficient folding. Also involved, together with DnaK and GrpE, in the DNA replication of plasmids through activation of initiation proteins. This Lactobacillus acidophilus (strain ATCC 700396 / NCK56 / N2 / NCFM) protein is Chaperone protein DnaJ.